A 171-amino-acid chain; its full sequence is Small ribosomal subunit protein uS13 (171 aa).

The disordered stretch occupies residues 128–171 (HERGQKVRGQRTKSTGRTEGTIGVNVEAIKEEQAEDDAADGGEE). Residues 160–171 (QAEDDAADGGEE) are compositionally biased toward acidic residues.

The protein belongs to the universal ribosomal protein uS13 family. As to quaternary structure, part of the 30S ribosomal subunit. Forms a loose heterodimer with protein S19. Forms two bridges to the 50S subunit in the 70S ribosome.

In terms of biological role, located at the top of the head of the 30S subunit, it contacts several helices of the 16S rRNA. In the 70S ribosome it contacts the 23S rRNA (bridge B1a) and protein L5 of the 50S subunit (bridge B1b), connecting the 2 subunits; these bridges are implicated in subunit movement. The sequence is that of Small ribosomal subunit protein uS13 from Halobacterium salinarum (strain ATCC 700922 / JCM 11081 / NRC-1) (Halobacterium halobium).